A 90-amino-acid polypeptide reads, in one-letter code: MSRSTKKAPFVHEGLFKKIEEMNGNGEKKVVKTWSRSSTIFPQFIGHTIAVHDGRKHVPVYVSEDMVGHKLGEFVLTRTYKGHDDKTSKR.

Belongs to the universal ribosomal protein uS19 family.

Its function is as follows. Protein S19 forms a complex with S13 that binds strongly to the 16S ribosomal RNA. The sequence is that of Small ribosomal subunit protein uS19 from Clostridium beijerinckii (strain ATCC 51743 / NCIMB 8052) (Clostridium acetobutylicum).